A 218-amino-acid chain; its full sequence is Protein-methionine-sulfoxide reductase heme-binding subunit MsrQ (218 aa).

5 helical membrane passes run 12–32 (TLIK…LALF), 82–102 (MLGL…LWFD), 118–138 (PFIT…ITST), 150–170 (WQWL…HYWW), and 180–200 (QPII…FWAW).

This sequence belongs to the MsrQ family. In terms of assembly, heterodimer of a catalytic subunit (MsrP) and a heme-binding subunit (MsrQ). FMN serves as cofactor. Requires heme b as cofactor.

It localises to the cell inner membrane. Functionally, part of the MsrPQ system that repairs oxidized periplasmic proteins containing methionine sulfoxide residues (Met-O), using respiratory chain electrons. Thus protects these proteins from oxidative-stress damage caused by reactive species of oxygen and chlorine generated by the host defense mechanisms. MsrPQ is essential for the maintenance of envelope integrity under bleach stress, rescuing a wide series of structurally unrelated periplasmic proteins from methionine oxidation. MsrQ provides electrons for reduction to the reductase catalytic subunit MsrP, using the quinone pool of the respiratory chain. The protein is Protein-methionine-sulfoxide reductase heme-binding subunit MsrQ of Herminiimonas arsenicoxydans.